The chain runs to 123 residues: Small ribosomal subunit protein uS12 (123 aa).

Residue D89 is modified to 3-methylthioaspartic acid.

It belongs to the universal ribosomal protein uS12 family. In terms of assembly, part of the 30S ribosomal subunit. Contacts proteins S8 and S17. May interact with IF1 in the 30S initiation complex.

Functionally, with S4 and S5 plays an important role in translational accuracy. Interacts with and stabilizes bases of the 16S rRNA that are involved in tRNA selection in the A site and with the mRNA backbone. Located at the interface of the 30S and 50S subunits, it traverses the body of the 30S subunit contacting proteins on the other side and probably holding the rRNA structure together. The combined cluster of proteins S8, S12 and S17 appears to hold together the shoulder and platform of the 30S subunit. This Rhizobium leguminosarum bv. trifolii (strain WSM2304) protein is Small ribosomal subunit protein uS12.